Consider the following 239-residue polypeptide: MNKNIVIKSMAALAILTSATGINAAVVEETQQIANAEKNVTQVKDTNIFPYNGVVSFKDATGFVIGKNTIITNKHVSKDYKVGDRITAHPDGDKGNGGIYKIKSISDYPGDEDISVMNIEEQAVERGPKGFNFNENVQALNFAKDAKVDDKIKVIGYPLPAQNSFKQFESTGTIKRIKDNILNFDAYIEPGNSGSPVLNSNNEVIGVVYGGIGKIGSEYNGAVYFTPQIKDFIQKHIEQ.

A signal peptide spans methionine 1–alanine 36. Active-site charge relay system residues include histidine 75, aspartate 113, and serine 193.

It belongs to the peptidase S1B family.

It is found in the secreted. The polypeptide is Serine protease SplC (splC) (Staphylococcus aureus (strain MSSA476)).